The sequence spans 125 residues: Large ribosomal subunit protein bL19 (125 aa).

The protein belongs to the bacterial ribosomal protein bL19 family.

Functionally, this protein is located at the 30S-50S ribosomal subunit interface and may play a role in the structure and function of the aminoacyl-tRNA binding site. The sequence is that of Large ribosomal subunit protein bL19 from Wolbachia pipientis wMel.